The sequence spans 419 residues: Elongation factor Tu, chloroplastic (419 aa).

The tr-type G domain maps to 10 to 214; sequence KPHVNIGTIG…KVDEYIPTPD (205 aa). Residues 19–26 are G1; that stretch reads GHVDHGKT. 19-26 lines the GTP pocket; the sequence is GHVDHGKT. Position 26 (Thr-26) interacts with Mg(2+). The G2 stretch occupies residues 60–64; it reads GITIN. The interval 81–84 is G3; it reads DCPG. GTP contacts are provided by residues 81 to 85 and 136 to 139; these read DCPGH and NKED. The segment at 136-139 is G4; it reads NKED. The G5 stretch occupies residues 174-176; sequence SAL.

The protein belongs to the TRAFAC class translation factor GTPase superfamily. Classic translation factor GTPase family. EF-Tu/EF-1A subfamily.

The protein resides in the plastid. Its subcellular location is the chloroplast. The enzyme catalyses GTP + H2O = GDP + phosphate + H(+). Functionally, GTP hydrolase that promotes the GTP-dependent binding of aminoacyl-tRNA to the A-site of ribosomes during protein biosynthesis. The polypeptide is Elongation factor Tu, chloroplastic (tufA) (Tetradesmus obliquus (Green alga)).